The following is a 389-amino-acid chain: 8-amino-7-oxononanoate synthase (389 aa).

Arginine 18 provides a ligand contact to substrate. 104–105 (GY) contacts pyridoxal 5'-phosphate. Histidine 129 contributes to the substrate binding site. The pyridoxal 5'-phosphate site is built by serine 176, histidine 204, and threonine 232. N6-(pyridoxal phosphate)lysine is present on lysine 235. Position 351 (threonine 351) interacts with substrate.

The protein belongs to the class-II pyridoxal-phosphate-dependent aminotransferase family. BioF subfamily. In terms of assembly, homodimer. Requires pyridoxal 5'-phosphate as cofactor.

The catalysed reaction is 6-carboxyhexanoyl-[ACP] + L-alanine + H(+) = (8S)-8-amino-7-oxononanoate + holo-[ACP] + CO2. The protein operates within cofactor biosynthesis; biotin biosynthesis. Catalyzes the decarboxylative condensation of pimeloyl-[acyl-carrier protein] and L-alanine to produce 8-amino-7-oxononanoate (AON), [acyl-carrier protein], and carbon dioxide. The chain is 8-amino-7-oxononanoate synthase from Citrifermentans bemidjiense (strain ATCC BAA-1014 / DSM 16622 / JCM 12645 / Bem) (Geobacter bemidjiensis).